The chain runs to 208 residues: LexA repressor (208 aa).

Positions 29–49 (VREICSAVGLSSTSTVHGHIS) form a DNA-binding region, H-T-H motif. Active-site for autocatalytic cleavage activity residues include serine 129 and lysine 167.

It belongs to the peptidase S24 family. In terms of assembly, homodimer.

The enzyme catalyses Hydrolysis of Ala-|-Gly bond in repressor LexA.. Represses a number of genes involved in the response to DNA damage (SOS response), including recA and lexA. In the presence of single-stranded DNA, RecA interacts with LexA causing an autocatalytic cleavage which disrupts the DNA-binding part of LexA, leading to derepression of the SOS regulon and eventually DNA repair. This is LexA repressor from Limosilactobacillus reuteri (strain DSM 20016) (Lactobacillus reuteri).